The sequence spans 235 residues: Peptidase E (235 aa).

Catalysis depends on charge relay system residues Ser-122, Asp-137, and His-159.

Belongs to the peptidase S51 family.

The protein resides in the cytoplasm. It carries out the reaction Dipeptidase E catalyzes the hydrolysis of dipeptides Asp-|-Xaa. It does not act on peptides with N-terminal Glu, Asn or Gln, nor does it cleave isoaspartyl peptides.. Hydrolyzes dipeptides containing N-terminal aspartate residues. May play a role in allowing the cell to use peptide aspartate to spare carbon otherwise required for the synthesis of the aspartate family of amino acids. This chain is Peptidase E, found in Shewanella amazonensis (strain ATCC BAA-1098 / SB2B).